Reading from the N-terminus, the 689-residue chain is Glycine--tRNA ligase beta subunit (689 aa).

Belongs to the class-II aminoacyl-tRNA synthetase family. In terms of assembly, tetramer of two alpha and two beta subunits.

It localises to the cytoplasm. The enzyme catalyses tRNA(Gly) + glycine + ATP = glycyl-tRNA(Gly) + AMP + diphosphate. This is Glycine--tRNA ligase beta subunit from Yersinia enterocolitica serotype O:8 / biotype 1B (strain NCTC 13174 / 8081).